The primary structure comprises 490 residues: Betaine aldehyde dehydrogenase (490 aa).

3 residues coordinate K(+): Thr-26, Ile-27, and Asp-93. Gly-150–Trp-152 lines the NAD(+) pocket. Catalysis depends on Lys-162, which acts as the Charge relay system. Position 176-179 (Lys-176–Glu-179) interacts with NAD(+). Val-180 provides a ligand contact to K(+). NAD(+) is bound at residue Gly-230–Ser-233. Leu-246 provides a ligand contact to K(+). The active-site Proton acceptor is Glu-252. Residues Gly-254, Cys-286, and Glu-387 each coordinate NAD(+). Cys-286 functions as the Nucleophile in the catalytic mechanism. A Cysteine sulfenic acid (-SOH) modification is found at Cys-286. K(+)-binding residues include Lys-457 and Gly-460. The active-site Charge relay system is Glu-464.

The protein belongs to the aldehyde dehydrogenase family. As to quaternary structure, dimer of dimers. K(+) is required as a cofactor.

It carries out the reaction betaine aldehyde + NAD(+) + H2O = glycine betaine + NADH + 2 H(+). Its pathway is amine and polyamine biosynthesis; betaine biosynthesis via choline pathway; betaine from betaine aldehyde: step 1/1. Functionally, involved in the biosynthesis of the osmoprotectant glycine betaine. Catalyzes the irreversible oxidation of betaine aldehyde to the corresponding acid. The polypeptide is Betaine aldehyde dehydrogenase (Escherichia coli (strain 55989 / EAEC)).